The following is a 1205-amino-acid chain: Bromodomain and PHD finger-containing protein 3 (1205 aa).

Disordered stretches follow at residues 1-27 and 75-121; these read MRKP…KCSP and NSNK…SFRM. Ser17 is subject to Phosphoserine. Over residues 75–84 the composition is skewed to polar residues; it reads NSNKENSEQP. A compositionally biased stretch (basic residues) spans 89–99; it reads KSKKPSSKGKK. The PHD-type 1 zinc finger occupies 212-262; it reads DAFCCVCLDDECHNSNVILFCDICNLAVHQECYGVPYIPEGQWLCRCCLQS. A C2HC pre-PHD-type zinc finger spans residues 266–299; sequence PVDCILCPNKGGAFKQTSDGHWAHVVCAIWIPEV. The PHD-type 2 zinc finger occupies 323–387; that stretch reads LTCYICKQKG…RKTAYCEAHS (65 aa). Residues 387–472 are disordered; sequence SPPGAATARR…AGQDTPSTLP (86 aa). Ser400 and Ser403 each carry phosphoserine. Positions 417–432 are enriched in acidic residues; that stretch reads DGEEEEEEEVEEEEQE. Residues 444 to 456 show a composition bias toward basic residues; the sequence is VPKKSKMSLKQKI. An N6-acetyllysine mark is found at Lys447, Lys449, and Lys671. The Bromo domain occupies 589-693; it reads LELMPFNVLL…DLGGAILRHA (105 aa). Ser713 and Ser740 each carry phosphoserine. The interval 779 to 897 is disordered; the sequence is RQKLAQPPPP…LQLGNEPLQR (119 aa). Residues 817 to 827 are compositionally biased toward acidic residues; that stretch reads LQEEPEDDGDR. A compositionally biased stretch (low complexity) spans 839-851; that stretch reads EPTGPAPSLSEQE. Position 900 is a phosphoserine (Ser900). Disordered stretches follow at residues 907–926 and 931–1015; these read LSLM…VGRR and FKKA…SECS. Positions 942–955 are enriched in basic and acidic residues; sequence RSPDRVLENGEDHG. A phosphoserine mark is found at Ser962 and Ser965. A compositionally biased stretch (basic and acidic residues) spans 980–991; that stretch reads SCSESEGERSPQ. The PWWP domain maps to 1076 to 1159; that stretch reads PLELVWAKCR…RDKVLPLGVE (84 aa).

In terms of assembly, component of some HBO1 complex composed of KAT7/HBO1, MEAF6, ING4 or ING5, and BRPF3. Component of the MOZ/MORF complex composed at least of ING5, KAT6A, KAT6B, MEAF6 and one of BRPF1, BRD1/BRPF2 and BRPF3. Interacts with KAT7/HBO1; the interaction is direct.

It localises to the nucleus. Its function is as follows. Scaffold subunit of various histone acetyltransferase (HAT) complexes, such as the MOZ/MORF and HBO1 complexes, which have a histone H3 acetyltransferase activity. Plays a role in DNA replication initiation by directing KAT7/HBO1 specificity towards histone H3 'Lys-14' acetylation (H3K14ac), thereby facilitating the activation of replication origins. Component of the MOZ/MORF complex which has a histone H3 acetyltransferase activity. This Homo sapiens (Human) protein is Bromodomain and PHD finger-containing protein 3.